The sequence spans 362 residues: GTP cyclohydrolase FolE2 (362 aa).

This sequence belongs to the GTP cyclohydrolase IV family.

The catalysed reaction is GTP + H2O = 7,8-dihydroneopterin 3'-triphosphate + formate + H(+). Its pathway is cofactor biosynthesis; 7,8-dihydroneopterin triphosphate biosynthesis; 7,8-dihydroneopterin triphosphate from GTP: step 1/1. Functionally, converts GTP to 7,8-dihydroneopterin triphosphate. The chain is GTP cyclohydrolase FolE2 from Jannaschia sp. (strain CCS1).